A 659-amino-acid chain; its full sequence is Delta(6)-protoilludene synthase (659 aa).

4 residues coordinate Mg(2+): Asp91, Asn227, Ser231, and Glu235. Residues 91 to 95 (DEHTD) carry the DDXXD motif motif. The (2E,6E)-farnesyl diphosphate site is built by Arg316 and Tyr317. Residues 528–586 (PQFSKTSGAPNGAHTPTTTNGSIKSNGFVSGDTNGHANGNGHVQTRSSTPSSSSSSTSS) are disordered. The segment covering 530–573 (FSKTSGAPNGAHTPTTTNGSIKSNGFVSGDTNGHANGNGHVQTR) has biased composition (polar residues). Low complexity predominate over residues 574–586 (SSTPSSSSSSTSS).

It belongs to the terpene synthase family. Mg(2+) is required as a cofactor.

The catalysed reaction is (2E,6E)-farnesyl diphosphate = Delta(6)-protoilludene + diphosphate. Terpene cyclase that catalyzes the cyclization of farnesyl diphosphate (FPP) to delta(6)-protoilludene. The polypeptide is Delta(6)-protoilludene synthase (Cyclocybe aegerita (Black poplar mushroom)).